Here is a 90-residue protein sequence, read N- to C-terminus: MARVTVEDAVDKIGNRFDLVLVAARRARQIATEGKDPMVDVQNDKPTVTALREIEEGLVTAATLEQADLQAQEQQEHAEFASVANILSDQ.

This sequence belongs to the RNA polymerase subunit omega family. As to quaternary structure, the RNAP catalytic core consists of 2 alpha, 1 beta, 1 beta' and 1 omega subunit. When a sigma factor is associated with the core the holoenzyme is formed, which can initiate transcription.

The enzyme catalyses RNA(n) + a ribonucleoside 5'-triphosphate = RNA(n+1) + diphosphate. Functionally, promotes RNA polymerase assembly. Latches the N- and C-terminal regions of the beta' subunit thereby facilitating its interaction with the beta and alpha subunits. The sequence is that of DNA-directed RNA polymerase subunit omega from Alteromonas mediterranea (strain DSM 17117 / CIP 110805 / LMG 28347 / Deep ecotype).